Reading from the N-terminus, the 232-residue chain is Response regulator MprA (232 aa).

Residues 4 to 118 form the Response regulatory domain; sequence RILVVDDDRA…ELLARMRALL (115 aa). The residue at position 48 (D48) is a 4-aspartylphosphate. The ompR/PhoB-type DNA-binding region spans 131-229; the sequence is SVAMTFSDLS…VRGVGYVLRE (99 aa).

In terms of processing, phosphorylated and dephosphorylated by MprB.

It localises to the cytoplasm. Functionally, member of the two-component regulatory system MprB/MprA which contributes to maintaining a balance among several systems involved in stress resistance and is required for establishment and maintenance of persistent infection in the host. Functions as a transcriptional regulator that recognizes a 19-bp nucleotide motif comprizing two loosely conserved 8-bp direct DNA-binding motif repeats separated by a 3-bp spacer region. The sequence is that of Response regulator MprA (mprA) from Mycobacterium ulcerans (strain Agy99).